A 126-amino-acid polypeptide reads, in one-letter code: Protein HEAT-INDUCED TAS1 TARGET 3 (126 aa).

The protein belongs to the heat induced plant HTT protein family. In terms of tissue distribution, expressed in seedlings, leaves, stems, inflorescences and siliques.

Its subcellular location is the cytoplasm. The protein localises to the nucleus. Mediates both basal and acquired thermotolerance. The chain is Protein HEAT-INDUCED TAS1 TARGET 3 from Arabidopsis thaliana (Mouse-ear cress).